Consider the following 449-residue polypeptide: Glucose-6-phosphate isomerase (449 aa).

Glu-291 acts as the Proton donor in catalysis. Residues His-312 and Lys-426 contribute to the active site.

It belongs to the GPI family.

It is found in the cytoplasm. The catalysed reaction is alpha-D-glucose 6-phosphate = beta-D-fructose 6-phosphate. The protein operates within carbohydrate biosynthesis; gluconeogenesis. Its pathway is carbohydrate degradation; glycolysis; D-glyceraldehyde 3-phosphate and glycerone phosphate from D-glucose: step 2/4. Catalyzes the reversible isomerization of glucose-6-phosphate to fructose-6-phosphate. This Streptococcus pyogenes serotype M28 (strain MGAS6180) protein is Glucose-6-phosphate isomerase.